Reading from the N-terminus, the 321-residue chain is Glutathione synthetase (321 aa).

The 187-residue stretch at 125–311 folds into the ATP-grasp domain; sequence EKLFTGWFPH…IAGQFIAFLE (187 aa). 151 to 208 lines the ATP pocket; the sequence is FIREQKEVVIKPLGAMAGESIFYLTVNDPNIPVVIETMTANGHQLVMAQRFIPEVKSG. Mg(2+) contacts are provided by Glu282 and Asn284.

The protein belongs to the prokaryotic GSH synthase family. Mg(2+) is required as a cofactor. Mn(2+) serves as cofactor.

It carries out the reaction gamma-L-glutamyl-L-cysteine + glycine + ATP = glutathione + ADP + phosphate + H(+). The protein operates within sulfur metabolism; glutathione biosynthesis; glutathione from L-cysteine and L-glutamate: step 2/2. This Coxiella burnetii (strain RSA 493 / Nine Mile phase I) protein is Glutathione synthetase.